The chain runs to 320 residues: uncharacterized protein (320 aa).

One can recognise an FHA domain in the interval 22–86 (KTIGRSSSFD…IRDLNNKTGT (65 aa)). Positions 242-264 (TDTDTTEEKEEEEEKEEGDDEEG) are disordered.

This is an uncharacterized protein from Saccharomyces cerevisiae (strain ATCC 204508 / S288c) (Baker's yeast).